Reading from the N-terminus, the 152-residue chain is Putative polyketide cyclase (152 aa).

This sequence to polyketide cyclases.

It functions in the pathway antibiotic biosynthesis; curamycin biosynthesis. This is Putative polyketide cyclase (curF) from Streptomyces cyaneus (Streptomyces curacoi).